The chain runs to 357 residues: tRNA/tmRNA (uracil-C(5))-methyltransferase (357 aa).

Residues Gln-180, Tyr-209, Asn-214, Glu-230, and Asp-290 each coordinate S-adenosyl-L-methionine. Catalysis depends on Cys-315, which acts as the Nucleophile. Glu-349 serves as the catalytic Proton acceptor.

It belongs to the class I-like SAM-binding methyltransferase superfamily. RNA M5U methyltransferase family. TrmA subfamily.

It catalyses the reaction uridine(54) in tRNA + S-adenosyl-L-methionine = 5-methyluridine(54) in tRNA + S-adenosyl-L-homocysteine + H(+). It carries out the reaction uridine(341) in tmRNA + S-adenosyl-L-methionine = 5-methyluridine(341) in tmRNA + S-adenosyl-L-homocysteine + H(+). Dual-specificity methyltransferase that catalyzes the formation of 5-methyluridine at position 54 (m5U54) in all tRNAs, and that of position 341 (m5U341) in tmRNA (transfer-mRNA). This Campylobacter jejuni (strain RM1221) protein is tRNA/tmRNA (uracil-C(5))-methyltransferase.